A 343-amino-acid polypeptide reads, in one-letter code: Vancomycin C-type resistance protein VanC1 (343 aa).

Residues 134-336 (HQLADTMGIA…YEILVEQLIA (203 aa)) enclose the ATP-grasp domain. ATP is bound at residue 164 to 219 (IQDHGFPIFIKPNEAGSSKGITKVTDKTALQSALTTAFAYGSTVLIQKAIAGIEIG). Residues aspartate 290, glutamate 303, and asparagine 305 each coordinate Mg(2+). Aspartate 290, glutamate 303, and asparagine 305 together coordinate Mn(2+).

It belongs to the D-alanine--D-alanine ligase family. It depends on Mg(2+) as a cofactor. Requires Mn(2+) as cofactor.

It is found in the cell membrane. The catalysed reaction is D-serine + D-alanine + ATP = D-alanyl-D-serine + ADP + phosphate + H(+). In terms of biological role, D-alanine--D-alanine ligase of altered specificity, which catalyzes synthesis of D-Ala-D-Ser; produces a peptidoglycan which does not terminate in D-alanine but in D-serine, thus probably reducing affinity for vancomycin. Together with VanT and VanXYC, required for vancomycin resistance in E.gallinarum strain BM4174. In Enterococcus gallinarum, this protein is Vancomycin C-type resistance protein VanC1.